The following is a 156-amino-acid chain: Small ribosomal subunit protein uS7 (156 aa).

It belongs to the universal ribosomal protein uS7 family. Part of the 30S ribosomal subunit. Contacts proteins S9 and S11.

One of the primary rRNA binding proteins, it binds directly to 16S rRNA where it nucleates assembly of the head domain of the 30S subunit. Is located at the subunit interface close to the decoding center, probably blocks exit of the E-site tRNA. The chain is Small ribosomal subunit protein uS7 from Pseudomonas aeruginosa (strain LESB58).